A 663-amino-acid chain; its full sequence is Probable rhamnogalacturonate lyase B (663 aa).

The N-terminal stretch at methionine 1–alanine 19 is a signal peptide. Residues asparagine 27, asparagine 110, asparagine 143, asparagine 239, asparagine 285, asparagine 495, asparagine 535, asparagine 569, asparagine 597, and asparagine 638 are each glycosylated (N-linked (GlcNAc...) asparagine).

This sequence belongs to the polysaccharide lyase 4 family.

The protein resides in the secreted. The enzyme catalyses Endotype eliminative cleavage of L-alpha-rhamnopyranosyl-(1-&gt;4)-alpha-D-galactopyranosyluronic acid bonds of rhamnogalacturonan I domains in ramified hairy regions of pectin leaving L-rhamnopyranose at the reducing end and 4-deoxy-4,5-unsaturated D-galactopyranosyluronic acid at the non-reducing end.. Functionally, pectinolytic enzymes consist of four classes of enzymes: pectin lyase, polygalacturonase, pectin methylesterase and rhamnogalacturonase. Degrades the rhamnogalacturonan I (RG-I) backbone of pectin. The sequence is that of Probable rhamnogalacturonate lyase B (rglB) from Aspergillus flavus (strain ATCC 200026 / FGSC A1120 / IAM 13836 / NRRL 3357 / JCM 12722 / SRRC 167).